A 377-amino-acid chain; its full sequence is MGIQGLAKLLGDIAPSGIKENEIKNYFGRKIAIDASMSIYQFLIAVRSDGSQLTNEAGETTSHLMGLFYRTIRMVENGIKPVYVFDGKPPQLKSGELAKRTERREEAQKALSKAEEAGDTENIDKFSRRLVRVTKEHNEECKQLLKLMGIPYVEAPCEAEAQCAALVKSGKVYATGTEDMDALTFGTTVMLRHLTFSEAKKMPIKEFHLQNVLSEAGLSQDEFIDLCILLGCDYCDSIKGIGPKRSVDLIRQHRSIDKILENIDTSKHPPPENWLYKEARELFKNPEVRNPEEIELKWEEPNEEALVTFMCQEKGFSEDRIRSGIKKLTKARHGSTQGRLDSFFKVLPSPANKRKLQDGKGSQNKKAKTGGKFKRPK.

Positions 1–104 are N-domain; the sequence is MGIQGLAKLL…GELAKRTERR (104 aa). Mg(2+) is bound at residue Asp34. 2 residues coordinate DNA: Arg47 and Arg70. Mg(2+) contacts are provided by Asp86, Glu158, Glu160, Asp179, and Asp181. Residues 122-253 form an I-domain region; sequence NIDKFSRRLV…KRSVDLIRQH (132 aa). Glu158 serves as a coordination point for DNA. DNA is bound by residues Gly231 and Asp233. Asp233 serves as a coordination point for Mg(2+). Residues 336–344 form an interaction with PCNA region; the sequence is TQGRLDSFF. The tract at residues 337–377 is disordered; sequence QGRLDSFFKVLPSPANKRKLQDGKGSQNKKAKTGGKFKRPK. A compositionally biased stretch (basic residues) spans 363-377; sequence QNKKAKTGGKFKRPK.

The protein belongs to the XPG/RAD2 endonuclease family. FEN1 subfamily. In terms of assembly, interacts with PCNA. Three molecules of FEN1 bind to one PCNA trimer with each molecule binding to one PCNA monomer. PCNA stimulates the nuclease activity without altering cleavage specificity. The cofactor is Mg(2+). Phosphorylated. Phosphorylation upon DNA damage induces relocalization to the nuclear plasma.

It is found in the nucleus. The protein localises to the nucleolus. The protein resides in the nucleoplasm. Its subcellular location is the mitochondrion. Structure-specific nuclease with 5'-flap endonuclease and 5'-3' exonuclease activities involved in DNA replication and repair. During DNA replication, cleaves the 5'-overhanging flap structure that is generated by displacement synthesis when DNA polymerase encounters the 5'-end of a downstream Okazaki fragment. It enters the flap from the 5'-end and then tracks to cleave the flap base, leaving a nick for ligation. Also involved in the long patch base excision repair (LP-BER) pathway, by cleaving within the apurinic/apyrimidinic (AP) site-terminated flap. Acts as a genome stabilization factor that prevents flaps from equilibrating into structures that lead to duplications and deletions. Also possesses 5'-3' exonuclease activity on nicked or gapped double-stranded DNA, and exhibits RNase H activity. Also involved in replication and repair of rDNA and in repairing mitochondrial DNA. The chain is Flap endonuclease 1 from Nematostella vectensis (Starlet sea anemone).